A 198-amino-acid chain; its full sequence is Nucleoid occlusion factor SlmA (198 aa).

The HTH tetR-type domain maps to 9 to 70 (RNRREEILQA…SLIEFIEDSL (62 aa)). A DNA-binding region (H-T-H motif) is located at residues 33–52 (TTAKLAANVGVSEAALYRHF). Positions 119–144 (DRLQGRINQLFERIEMQLRQVLREKK) form a coiled coil.

This sequence belongs to the nucleoid occlusion factor SlmA family. In terms of assembly, homodimer. Interacts with FtsZ.

The protein resides in the cytoplasm. It localises to the nucleoid. In terms of biological role, required for nucleoid occlusion (NO) phenomenon, which prevents Z-ring formation and cell division over the nucleoid. Acts as a DNA-associated cell division inhibitor that binds simultaneously chromosomal DNA and FtsZ, and disrupts the assembly of FtsZ polymers. SlmA-DNA-binding sequences (SBS) are dispersed on non-Ter regions of the chromosome, preventing FtsZ polymerization at these regions. This chain is Nucleoid occlusion factor SlmA, found in Yersinia pseudotuberculosis serotype I (strain IP32953).